The sequence spans 461 residues: Nuclear distribution protein PAC1 (461 aa).

The LisH domain occupies 9 to 41 (QAEELHKAIIAYLSANNLSSSATALRTELGLAE). The stretch at 61–88 (TSVVRLQKKIMDLESRNNALQSELDNAT) forms a coiled coil. 8 WD repeats span residues 114 to 155 (SHQN…RTIK), 157 to 197 (HTRP…KNIR), 201 to 248 (GHDH…CLKT), 251 to 290 (GHTAWIRDVYPSLDGRYLLSTGDDSTVRLWDLSVTNPENR), 295 to 355 (GHDH…LKTL), 357 to 396 (GHDNWVRALVFHPGGRYLLSVSDDKTLRCWDLEQDGKCVK), 401 to 444 (VHER…VRIR), and 446 to 461 (VIATGSVDMKLRIFAN).

The protein belongs to the WD repeat LIS1/nudF family. As to quaternary structure, self-associates. Interacts with NDL1 and dynein.

It localises to the cytoplasm. The protein resides in the cytoskeleton. It is found in the spindle pole. Functionally, positively regulates the activity of the minus-end directed microtubule motor protein dynein. May enhance dynein-mediated microtubule sliding by targeting dynein to the microtubule plus end. Required for nuclear migration during vegetative growth as well as development. Required for retrograde early endosome (EE) transport from the hyphal tip. Required for localization of dynein to the mitotic spindle poles. Recruits additional proteins to the dynein complex at SPBs. The chain is Nuclear distribution protein PAC1 from Pyricularia oryzae (strain 70-15 / ATCC MYA-4617 / FGSC 8958) (Rice blast fungus).